The following is a 188-amino-acid chain: Elongation factor P-like protein (188 aa).

It belongs to the elongation factor P family.

This Xanthomonas campestris pv. campestris (strain 8004) protein is Elongation factor P-like protein.